The following is a 496-amino-acid chain: Xylulose kinase (496 aa).

Substrate is bound at residue 83–84 (MH). Aspartate 237 serves as the catalytic Proton acceptor.

This sequence belongs to the FGGY kinase family.

It carries out the reaction D-xylulose + ATP = D-xylulose 5-phosphate + ADP + H(+). Catalyzes the phosphorylation of D-xylulose to D-xylulose 5-phosphate. The protein is Xylulose kinase of Staphylococcus epidermidis (strain ATCC 35984 / DSM 28319 / BCRC 17069 / CCUG 31568 / BM 3577 / RP62A).